The sequence spans 694 residues: DNA primase (694 aa).

A CHC2-type zinc finger spans residues 41–65 (CPFHDDKSPSFTVSPAKQFYYCFSC). The Toprim domain maps to 265-348 (DQAVVVEGYF…QGQVQLRVLN (84 aa)). Mg(2+) is bound by residues Glu271, Asp317, and Asp319.

This sequence belongs to the DnaG primase family. In terms of assembly, monomer. Interacts with DnaB. The cofactor is Zn(2+). Mg(2+) serves as cofactor.

It carries out the reaction ssDNA + n NTP = ssDNA/pppN(pN)n-1 hybrid + (n-1) diphosphate.. Its function is as follows. RNA polymerase that catalyzes the synthesis of short RNA molecules used as primers for DNA polymerase during DNA replication. This is DNA primase from Synechococcus elongatus (strain ATCC 33912 / PCC 7942 / FACHB-805) (Anacystis nidulans R2).